The chain runs to 209 residues: uncharacterized protein (209 aa).

3 helical membrane passes run 26-48, 147-169, and 179-196; these read LRYF…GLAV, AYLV…PFLM, and IVAA…VYLL.

Its subcellular location is the cell membrane. This is an uncharacterized protein from Archaeoglobus fulgidus (strain ATCC 49558 / DSM 4304 / JCM 9628 / NBRC 100126 / VC-16).